The chain runs to 351 residues: Dihydroorotate dehydrogenase (quinone) (351 aa).

FMN is bound by residues 67-71 and T91; that span reads AGFDK. A substrate-binding site is contributed by K71. A substrate-binding site is contributed by 116–120; the sequence is NAMGF. FMN-binding residues include N145 and N178. N178 serves as a coordination point for substrate. S181 functions as the Nucleophile in the catalytic mechanism. N183 contributes to the substrate binding site. FMN contacts are provided by K214 and T242. 243–244 is a substrate binding site; sequence NT. Residues G262, G291, and 312-313 each bind FMN; that span reads YS.

This sequence belongs to the dihydroorotate dehydrogenase family. Type 2 subfamily. As to quaternary structure, monomer. It depends on FMN as a cofactor.

It is found in the cell membrane. It carries out the reaction (S)-dihydroorotate + a quinone = orotate + a quinol. Its pathway is pyrimidine metabolism; UMP biosynthesis via de novo pathway; orotate from (S)-dihydroorotate (quinone route): step 1/1. Its function is as follows. Catalyzes the conversion of dihydroorotate to orotate with quinone as electron acceptor. In Helicobacter pylori (strain J99 / ATCC 700824) (Campylobacter pylori J99), this protein is Dihydroorotate dehydrogenase (quinone) (pyrD).